A 376-amino-acid polypeptide reads, in one-letter code: 12-oxophytodienoate reductase 1 (376 aa).

FMN contacts are provided by residues 35-37, alanine 68, and glutamine 110; that span reads PLT. Substrate-binding positions include serine 143 and 187–190; that span reads HGAH. Tyrosine 192 (proton donor) is an active-site residue. Position 239 (arginine 239) interacts with FMN. Arginine 279 provides a ligand contact to substrate. FMN-binding positions include glycine 309 and 330 to 331; that span reads GR.

The protein belongs to the NADH:flavin oxidoreductase/NADH oxidase family. The cofactor is FMN. Constitutively expressed in roots, leaves, cotyledons, cells culture and to a lower extent in flowers.

The protein localises to the cytoplasm. The enzyme catalyses (1S,2S)-OPC-8 + NADP(+) = (9S,13S,15Z)-12-oxophyto-10,15-dienoate + NADPH + H(+). The protein operates within lipid metabolism; oxylipin biosynthesis. Specifically cleaves olefinic bonds in alpha,beta-unsaturated carbonyls and may be involved in detoxification or modification of these reactive compounds. May be involved in the biosynthesis or metabolism of oxylipin signaling molecules. In vitro, reduces 9R,13R-12-oxophyodienoic acid (9R,13R-OPDA) to 9R,13R-OPC-8:0, but not 9S,13S-OPDA, the natural precursor of jasmonic acid. Also reduces N-ethylmaleimide and maleic acid. The polypeptide is 12-oxophytodienoate reductase 1 (OPR1) (Solanum lycopersicum (Tomato)).